Here is a 1266-residue protein sequence, read N- to C-terminus: 5-oxoprolinase 1 (1266 aa).

This sequence belongs to the oxoprolinase family. In terms of tissue distribution, expressed in roots, stems, leaves, flowers and siliques.

Its subcellular location is the cytoplasm. The enzyme catalyses 5-oxo-L-proline + ATP + 2 H2O = L-glutamate + ADP + phosphate + H(+). Functionally, catalyzes the cleavage of 5-oxo-L-proline to form L-glutamate coupled to the hydrolysis of ATP to ADP and inorganic phosphate. Acts in the glutathione degradation pathway. The polypeptide is 5-oxoprolinase 1 (Arabidopsis thaliana (Mouse-ear cress)).